Reading from the N-terminus, the 1357-residue chain is Kinectin (1357 aa).

Over 1–6 the chain is Cytoplasmic; that stretch reads MEFYES. A helical; Signal-anchor for type II membrane protein transmembrane segment spans residues 7 to 29; sequence AYFIVLIPSIVITVIFLFFWLFM. At 30-1357 the chain is on the lumenal side; that stretch reads KETLYDEVLA…KEKEHYQVLE (1328 aa). Disordered stretches follow at residues 48–81 and 103–218; these read IPTK…ESVP and NVVE…KQKT. Serine 75 bears the Phosphoserine; by FAM20C mark. At serine 77 the chain carries Phosphoserine. A compositionally biased stretch (basic and acidic residues) spans 121–135; it reads QKPVLEEQVIKESDA. Threonine 153 carries the post-translational modification Phosphothreonine. Residue serine 156 is modified to Phosphoserine. Residues 161-171 are compositionally biased toward basic residues; that stretch reads SKKKPGQKKSK. N-linked (GlcNAc...) asparagine glycans are attached at residues asparagine 172, asparagine 435, asparagine 772, asparagine 904, and asparagine 1055. A compositionally biased stretch (basic and acidic residues) spans 172–182; it reads NGSDDQDKKVE. The stretch at 330 to 1356 forms a coiled coil; it reads LIHQLQEKDK…TKEKEHYQVL (1027 aa). Serine 1084 carries the post-translational modification Phosphoserine. 2 N-linked (GlcNAc...) asparagine glycosylation sites follow: asparagine 1088 and asparagine 1263. The residue at position 1313 (serine 1313) is a Phosphoserine. The N-linked (GlcNAc...) asparagine glycan is linked to asparagine 1329.

It belongs to the kinectin family. As to quaternary structure, parallel homodimers formed between the membrane-bound and the cytosolic form, and also between 2 cytosolic forms. As to expression, high levels in peripheral blood lymphocytes, testis and ovary, lower levels in spleen, thymus, prostate, small intestine and colon.

Its subcellular location is the endoplasmic reticulum membrane. Its function is as follows. Receptor for kinesin thus involved in kinesin-driven vesicle motility. Accumulates in integrin-based adhesion complexes (IAC) upon integrin aggregation by fibronectin. The sequence is that of Kinectin (KTN1) from Homo sapiens (Human).